The sequence spans 897 residues: Alpha-actinin-2 (897 aa).

The actin-binding stretch occupies residues 1-257 (MNSMNQIETN…IMTYVSCFYH (257 aa)). Calponin-homology (CH) domains lie at 41 to 145 (KQQR…LRFA) and 154 to 260 (TSAK…HAFA). 4 Spectrin repeats span residues 284 to 394 (RLME…WLLN), 404 to 509 (HLAE…ALER), 519 to 630 (QLHL…SLQE), and 640 to 743 (RLRR…EVET). 2 consecutive EF-hand domains span residues 756-791 (EQMN…MGYD) and 792-827 (LGEA…ETAD). Residues Asp-769, Asn-773, Asp-780, Asp-805, Asn-807, and Thr-811 each contribute to the Ca(2+) site.

This sequence belongs to the alpha-actinin family. As to quaternary structure, homodimer; antiparallel. Post-translationally, ubiquitinated by FBXL22, leading to proteasomal degradation.

The protein localises to the cytoplasm. It is found in the myofibril. Its subcellular location is the sarcomere. The protein resides in the z line. Its function is as follows. F-actin cross-linking protein which is thought to anchor actin to a variety of intracellular structures. This is a bundling protein. This is Alpha-actinin-2 (ACTN2) from Gallus gallus (Chicken).